We begin with the raw amino-acid sequence, 487 residues long: Glutamyl-tRNA(Gln) amidotransferase subunit A (487 aa).

Residues Lys-82 and Ser-157 each act as charge relay system in the active site. The active-site Acyl-ester intermediate is the Ser-181.

The protein belongs to the amidase family. GatA subfamily. In terms of assembly, heterotrimer of A, B and C subunits.

It carries out the reaction L-glutamyl-tRNA(Gln) + L-glutamine + ATP + H2O = L-glutaminyl-tRNA(Gln) + L-glutamate + ADP + phosphate + H(+). In terms of biological role, allows the formation of correctly charged Gln-tRNA(Gln) through the transamidation of misacylated Glu-tRNA(Gln) in organisms which lack glutaminyl-tRNA synthetase. The reaction takes place in the presence of glutamine and ATP through an activated gamma-phospho-Glu-tRNA(Gln). This is Glutamyl-tRNA(Gln) amidotransferase subunit A from Fusobacterium nucleatum subsp. nucleatum (strain ATCC 25586 / DSM 15643 / BCRC 10681 / CIP 101130 / JCM 8532 / KCTC 2640 / LMG 13131 / VPI 4355).